Reading from the N-terminus, the 223-residue chain is Putative lipoprotein NMB1126/NMB1164 (223 aa).

The N-terminal stretch at 1–19 is a signal peptide; sequence MKTVSTAVVLAAAAVSLTG. Cys20 carries N-palmitoyl cysteine lipidation. Cys20 carries the S-diacylglycerol cysteine lipid modification.

The protein localises to the cell membrane. The protein is Putative lipoprotein NMB1126/NMB1164 of Neisseria meningitidis serogroup B (strain ATCC BAA-335 / MC58).